Reading from the N-terminus, the 95-residue chain is MNIRPLRDRIIVERIEEETTTAGGLIIPDSAKEKPQQGIVKAVGKGKVLEDGTVLPMDIKVGDRVLFGKYAGSEIKIDGLEYQIMREDDILGVLE.

It belongs to the GroES chaperonin family. Heptamer of 7 subunits arranged in a ring. Interacts with the chaperonin GroEL.

The protein resides in the cytoplasm. Together with the chaperonin GroEL, plays an essential role in assisting protein folding. The GroEL-GroES system forms a nano-cage that allows encapsulation of the non-native substrate proteins and provides a physical environment optimized to promote and accelerate protein folding. GroES binds to the apical surface of the GroEL ring, thereby capping the opening of the GroEL channel. The polypeptide is Co-chaperonin GroES (Syntrophotalea carbinolica (strain DSM 2380 / NBRC 103641 / GraBd1) (Pelobacter carbinolicus)).